The primary structure comprises 542 residues: Probable cysteine proteinase 361L (542 aa).

Active-site residues include Cys-172, His-382, and Asn-414. The chain crosses the membrane as a helical span at residues 520-540 (TNNWYIYALIIIFILIIFFVL).

It belongs to the peptidase C1 family.

It is found in the membrane. Probable cysteine protease. This is Probable cysteine proteinase 361L from Acheta domesticus (House cricket).